The sequence spans 248 residues: 3-deoxy-manno-octulosonate cytidylyltransferase (248 aa).

It belongs to the KdsB family.

The protein resides in the cytoplasm. The catalysed reaction is 3-deoxy-alpha-D-manno-oct-2-ulosonate + CTP = CMP-3-deoxy-beta-D-manno-octulosonate + diphosphate. Its pathway is nucleotide-sugar biosynthesis; CMP-3-deoxy-D-manno-octulosonate biosynthesis; CMP-3-deoxy-D-manno-octulosonate from 3-deoxy-D-manno-octulosonate and CTP: step 1/1. The protein operates within bacterial outer membrane biogenesis; lipopolysaccharide biosynthesis. Activates KDO (a required 8-carbon sugar) for incorporation into bacterial lipopolysaccharide in Gram-negative bacteria. The sequence is that of 3-deoxy-manno-octulosonate cytidylyltransferase from Cronobacter sakazakii (strain ATCC BAA-894) (Enterobacter sakazakii).